A 350-amino-acid chain; its full sequence is Erythronate-4-phosphate dehydrogenase (350 aa).

Substrate contacts are provided by S45 and T66. NAD(+)-binding positions include 124–125 (QV), D144, 203–205 (ASR), and D226. The active site involves R205. Residue E231 is part of the active site. H248 acts as the Proton donor in catalysis. Position 251 (G251) interacts with NAD(+).

This sequence belongs to the D-isomer specific 2-hydroxyacid dehydrogenase family. PdxB subfamily. As to quaternary structure, homodimer.

It is found in the cytoplasm. The enzyme catalyses 4-phospho-D-erythronate + NAD(+) = (R)-3-hydroxy-2-oxo-4-phosphooxybutanoate + NADH + H(+). It functions in the pathway cofactor biosynthesis; pyridoxine 5'-phosphate biosynthesis; pyridoxine 5'-phosphate from D-erythrose 4-phosphate: step 2/5. Catalyzes the oxidation of erythronate-4-phosphate to 3-hydroxy-2-oxo-4-phosphonooxybutanoate. The protein is Erythronate-4-phosphate dehydrogenase of Legionella pneumophila subsp. pneumophila (strain Philadelphia 1 / ATCC 33152 / DSM 7513).